Reading from the N-terminus, the 331-residue chain is UDP-glucose 4-epimerase (331 aa).

Residues 11–12 (YI), 31–36 (DNLITG), 51–52 (DI), 73–77 (FAAFS), N92, T117, Y141, K145, and F169 contribute to the NAD(+) site. Residues T117 and Y141 each contribute to the substrate site. The Proton acceptor role is filled by Y141. Substrate contacts are provided by residues N170, 189–190 (HI), 206–208 (QIY), R221, and 282–285 (RAGD).

This sequence belongs to the NAD(P)-dependent epimerase/dehydratase family. In terms of assembly, homodimer. NAD(+) serves as cofactor.

The enzyme catalyses UDP-alpha-D-glucose = UDP-alpha-D-galactose. It functions in the pathway carbohydrate metabolism; galactose metabolism. This chain is UDP-glucose 4-epimerase (galE), found in Lacticaseibacillus casei (Lactobacillus casei).